The chain runs to 1303 residues: Latent-transforming growth factor beta-binding protein 3 (1303 aa).

The signal sequence occupies residues 1–43 (MPGPRGAAGGLAPEMRGAGAAGLLALLLLLLLLLLGLGGRVEG). N-linked (GlcNAc...) asparagine glycosylation is present at N89. In terms of domain architecture, EGF-like 1 spans 109–141 (RVVVCPLPCMNGGQCSSRNQCLCPPDFTGRFCQ). Intrachain disulfides connect C113–C123, C117–C129, C131–C140, C279–C303, C289–C316, and C304–C319. The tract at residues 247–282 (SSNAESAAPSQHLLPHPKPSHPRPPTQKPLGRCFQD) is disordered. The 55-residue stretch at 277-331 (GRCFQDTLPKQPCGSNPLPGLTKQEDCCGSIGTAWGQSKCHKCPQLQYTGVQKPG) folds into the TB 1 domain. The N-linked (GlcNAc...) asparagine glycan is linked to N349. Residues 355-395 (DINECAMPGVCRHGDCLNNPGSYRCVCPPGHSLGPSRTQCI) enclose the EGF-like 2; calcium-binding domain. Cystine bridges form between C359/C370, C365/C379, C381/C394, C405/C428, C415/C440, C429/C443, and C430/C455. Residues 403-455 (SLCFRLVSPEHQCQHPLTTRLTRQLCCCSVGKAWGARCQRCPTDGTAAFKEIC) form the TB 2 domain. Residues 478-552 (FSLFLHPDGP…ISRPSPPTMR (75 aa)) form a disordered region. Residues 529-540 (PTATTTPARPYP) show a composition bias toward low complexity. An EGF-like 3 domain is found at 574 to 615 (ETDECRLNQNICGHGECVPGPPDYSCHCNPGYRSHPQHRYCV). Disulfide bonds link C578-C590, C585-C599, C601-C614, C620-C632, C625-C641, C664-C676, C670-C685, C687-C701, C748-C759, C754-C768, C770-C783, C789-C800, C795-C809, C811-C824, C830-C841, C836-C850, C852-C864, C870-C883, C877-C892, C894-C907, C919-C942, C929-C954, C943-C959, C944-C971, C997-C1010, C1005-C1019, C1021-C1034, C1040-C1051, C1046-C1060, C1062-C1075, C1086-C1097, C1092-C1106, C1108-C1121, C1138-C1162, C1148-C1174, C1163-C1177, and C1164-C1186. Residues 616–659 (DVNECEAEPCGPGRGICMNTGGSYNCHCNRGYRLHVGAGGRSCV) enclose the EGF-like 4; calcium-binding domain. Positions 660–702 (DLNECAKPHLCGDGGFCINFPGHYKCNCYPGYRLKASRPPVCE) constitute an EGF-like 5; calcium-binding domain. In terms of domain architecture, EGF-like 6; calcium-binding spans 744-784 (DVNECAEGSPCSPGWCENLPGSFRCTCAQGYAPAPDGRSCL). In terms of domain architecture, EGF-like 7; calcium-binding spans 785–825 (DVDECEAGDVCDNGICSNTPGSFQCQCLSGYHLSRDRSHCE). Residues 826-865 (DIDECDFPAACIGGDCINTNGSYRCLCPQGHRLVGGRKCQ) form the EGF-like 8; calcium-binding domain. N845 carries an N-linked (GlcNAc...) asparagine glycan. The 43-residue stretch at 866–908 (DIDECSQDPSLCLPHGACKNLQGSYVCVCDEGFTPTQDQHGCE) folds into the EGF-like 9; calcium-binding domain. Residues 917–971 (KECYLNFDDTVFCDSVLATNVTQQECCCSLGAGWGDHCEIYPCPVYSSAEFHSLC) enclose the TB 3 domain. The N-linked (GlcNAc...) asparagine glycan is linked to N936. An EGF-like 10; calcium-binding domain is found at 993-1035 (DIDECMLFGSEICKEGKCVNTQPGYECYCKQGFYYDGNLLECV). The region spanning 1036–1076 (DVDECLDESNCRNGVCENTRGGYRCACTPPAEYSPAQRQCL) is the EGF-like 11; calcium-binding domain. Residues 1082–1122 (DVDECQDPAACRPGRCVNLPGSYRCECRPPWVPGPSGRDCQ) enclose the EGF-like 12; calcium-binding domain. Residues 1136 to 1186 (DVCWSQRGEDGMCAGPLAGPALTFDDCCCRQGRGWGAQCRPCPPRGAGSHC) form the TB 4 domain. Over residues 1188-1198 (TSQSESNSFWD) the composition is skewed to polar residues. The disordered stretch occupies residues 1188 to 1219 (TSQSESNSFWDTSPLLLGKPPRDEDSSEEDSD). The EGF-like 13; calcium-binding domain occupies 1254–1298 (DIDECRELNQRGLLCKSERCVNTSGSFRCVCKAGFARSRPHGACV). 2 disulfides stabilise this stretch: C1258-C1273 and C1268-C1282. N-linked (GlcNAc...) asparagine glycosylation occurs at N1275.

Belongs to the LTBP family. As to quaternary structure, forms part of the large latent transforming growth factor beta precursor complex; removal is essential for activation of complex. Interacts with EFEMP2. In terms of processing, contains hydroxylated asparagine residues. Post-translationally, two intrachain disulfide bonds from the TB3 domain are rearranged upon TGFB1 binding, and form interchain bonds with TGFB1 propeptide, anchoring it to the extracellular matrix. Isoform 2: Expressed prominently in heart, skeletal muscle, prostate, testis, small intestine and ovary. Isoform 1: Strongly expressed in pancreas and liver.

The protein localises to the secreted. It localises to the extracellular space. The protein resides in the extracellular matrix. Key regulator of transforming growth factor beta (TGFB1, TGFB2 and TGFB3) that controls TGF-beta activation by maintaining it in a latent state during storage in extracellular space. Associates specifically via disulfide bonds with the Latency-associated peptide (LAP), which is the regulatory chain of TGF-beta, and regulates integrin-dependent activation of TGF-beta. The chain is Latent-transforming growth factor beta-binding protein 3 (LTBP3) from Homo sapiens (Human).